Here is a 935-residue protein sequence, read N- to C-terminus: Protocadherin gamma-A11 (935 aa).

The first 29 residues, 1-29 (MANRLQRGDRSRLLLLLCIFLGTLRGFRA), serve as a signal peptide directing secretion. Cadherin domains are found at residues 30 to 134 (RQIR…APSF), 135 to 243 (QEDE…IPMF), 244 to 348 (TQSV…APEI), 349 to 453 (TITS…PPVF), 454 to 563 (PHSS…APEI), and 571 to 677 (DGST…ADLG). At 30–693 (RQIRYSVPEE…NSETSDLSLY (664 aa)) the chain is on the extracellular side. Residue asparagine 48 is glycosylated (N-linked (GlcNAc...) asparagine). 4 N-linked (GlcNAc...) asparagine glycosylation sites follow: asparagine 255, asparagine 266, asparagine 420, and asparagine 546. Residues 694-714 (LVVAVAAVSCIFLVFVIVLLA) form a helical membrane-spanning segment. At 715–935 (LRLWRWHKSR…KKKSGKKEKK (221 aa)) the chain is on the cytoplasmic side. Disordered stretches follow at residues 805–844 (CDPT…WPNN) and 905–935 (ATLT…KEKK). Over residues 807–844 (PTSNQQAPPNTDWRFSQAQRPGTSGSQNGDDTGTWPNN) the composition is skewed to polar residues. Positions 925-935 (NKKKSGKKEKK) are enriched in basic residues.

It localises to the cell membrane. Potential calcium-dependent cell-adhesion protein. May be involved in the establishment and maintenance of specific neuronal connections in the brain. The protein is Protocadherin gamma-A11 (PCDHGA11) of Homo sapiens (Human).